Consider the following 447-residue polypeptide: Phosphoglucosamine mutase (447 aa).

S106 serves as the catalytic Phosphoserine intermediate. Mg(2+) is bound by residues S106, D245, D247, and D249. The residue at position 106 (S106) is a Phosphoserine.

This sequence belongs to the phosphohexose mutase family. Mg(2+) serves as cofactor. Post-translationally, activated by phosphorylation.

The enzyme catalyses alpha-D-glucosamine 1-phosphate = D-glucosamine 6-phosphate. Functionally, catalyzes the conversion of glucosamine-6-phosphate to glucosamine-1-phosphate. The protein is Phosphoglucosamine mutase of Cupriavidus metallidurans (strain ATCC 43123 / DSM 2839 / NBRC 102507 / CH34) (Ralstonia metallidurans).